Here is a 413-residue protein sequence, read N- to C-terminus: MVFKLLEQAGIKIDLDDEPKKVQTAPQFDDDDENEIRIVIVGVGGSGNNTITRLYDLGVQGAELIAMNTDAQALKHAKAHKKLLLGKDLTQGKGSGGDPEVGYRAAEASAHEIAETIGDADLVFITAGMGNGTGTGAAPVVARVIKERARHNGRFREPLVISVVTYPFKNEGKIREEKAKAGIKALLYYSDTVVIIENDKLLQLVPKLPINAAFRFADEIIARMVKGITETIKLPSMVNIDFADVYSIMHNGGAALIGIGESDSSNRAVDAVKNALQNKLLDVEYGSGEKALVHFTVGPDVSLGEINEAMNIVYEKLGEKSEIKWGARIDEDMGKMVRAMVIMTGVKSPHILGGETALQLPVKESLLPAEPKAGFNSFEDKIYKVISRKSDEKPGSDMRGYINKLLADFDDLS.

GTP contacts are provided by residues 132 to 134 (GTG), glutamate 171, arginine 175, and aspartate 218.

This sequence belongs to the FtsZ family. Homodimer. Polymerizes to form a dynamic ring structure in a strictly GTP-dependent manner. Interacts directly with several other division proteins.

The protein localises to the cytoplasm. In terms of biological role, essential cell division protein that forms a contractile ring structure (Z ring) at the future cell division site. The regulation of the ring assembly controls the timing and the location of cell division. One of the functions of the FtsZ ring is to recruit other cell division proteins to the septum to produce a new cell wall between the dividing cells. Binds GTP and shows GTPase activity. The polypeptide is Cell division protein FtsZ 2 (Thermococcus kodakarensis (strain ATCC BAA-918 / JCM 12380 / KOD1) (Pyrococcus kodakaraensis (strain KOD1))).